A 377-amino-acid polypeptide reads, in one-letter code: Alkane 1-monooxygenase 2 (377 aa).

The next 4 membrane-spanning stretches (helical) occupy residues 17–37 (GYWI…WSLG), 43–63 (AWPW…DAIV), 87–107 (VLSL…GWIL), and 116–136 (VGQL…GITV). Fe cation-binding residues include histidine 138, histidine 142, histidine 168, histidine 172, and histidine 173. The helical transmembrane segment at 236–256 (ALFLLGFSLAFGWLGAIFFLG) threads the bilayer. Fe cation-binding residues include histidine 312, histidine 315, and histidine 316.

The protein belongs to the fatty acid desaturase type 1 family. AlkB subfamily. It depends on Fe(3+) as a cofactor.

Its subcellular location is the cell inner membrane. The enzyme catalyses octane + 2 reduced [rubredoxin] + O2 + 2 H(+) = 2 oxidized [rubredoxin] + octan-1-ol + H2O. It participates in hydrocarbon metabolism; alkane degradation. Catalyzes the hydroxylation of n-alkanes in the presence of a NADH-rubredoxin reductase and rubredoxin. It preferably hydroxylases C12-C20 hydrocarbons. This Pseudomonas aeruginosa (strain ATCC 15692 / DSM 22644 / CIP 104116 / JCM 14847 / LMG 12228 / 1C / PRS 101 / PAO1) protein is Alkane 1-monooxygenase 2 (alkB2).